Consider the following 363-residue polypeptide: Chorismate synthase (363 aa).

Residue Arg-48 coordinates NADP(+). FMN-binding positions include 125–127, 238–239, Gly-278, 293–297, and Arg-319; these read RSS, NA, and KPTAS.

This sequence belongs to the chorismate synthase family. Homotetramer. FMNH2 serves as cofactor.

It carries out the reaction 5-O-(1-carboxyvinyl)-3-phosphoshikimate = chorismate + phosphate. The protein operates within metabolic intermediate biosynthesis; chorismate biosynthesis; chorismate from D-erythrose 4-phosphate and phosphoenolpyruvate: step 7/7. Functionally, catalyzes the anti-1,4-elimination of the C-3 phosphate and the C-6 proR hydrogen from 5-enolpyruvylshikimate-3-phosphate (EPSP) to yield chorismate, which is the branch point compound that serves as the starting substrate for the three terminal pathways of aromatic amino acid biosynthesis. This reaction introduces a second double bond into the aromatic ring system. This Acinetobacter baylyi (strain ATCC 33305 / BD413 / ADP1) protein is Chorismate synthase.